A 105-amino-acid polypeptide reads, in one-letter code: UPF0235 protein RF_1332 (105 aa).

The protein belongs to the UPF0235 family.

In Rickettsia felis (strain ATCC VR-1525 / URRWXCal2) (Rickettsia azadi), this protein is UPF0235 protein RF_1332.